Reading from the N-terminus, the 526-residue chain is Efflux pump aunC (526 aa).

Transmembrane regions (helical) follow at residues 23–43 (LCYK…CTSL), 64–84 (DVGW…LPFG), 89–109 (FFPI…GSFI), 125–145 (VAGL…TQCV), 155–175 (GFIM…GGAF), 183–203 (WCFY…FFTF), 218–238 (AAGL…CLLL), 254–274 (IIAL…LQLW), 296–316 (LYGF…PIWF), 339–359 (VIFA…GPFM), 360–380 (LLSA…HPSS), 386–406 (IGYQ…PVFV), 418–438 (TATA…VSVA), and 491–511 (VHTF…ATVI).

The protein belongs to the major facilitator superfamily. TCR/Tet family.

The protein localises to the cell membrane. Functionally, efflux pump; part of the gene cluster that mediates the biosynthesis of aurasperone B, a dimeric gamma-naphthopyrone. This Aspergillus niger (strain ATCC 1015 / CBS 113.46 / FGSC A1144 / LSHB Ac4 / NCTC 3858a / NRRL 328 / USDA 3528.7) protein is Efflux pump aunC.